The chain runs to 424 residues: MSSNNLIKQLQERGLIAQVTDENALAERLAQGPVSLYCGFDPTADSLHLGHLVPLLCLKRFQLAGHKPVALVGGATGLIGDPSFKATERKLNTEATVKEWVEKIRRQVSPFLDFDCGENSAKTANNYDWFGNMDVLAFLRDIGKHFSVNQMINKEAVKQRLNRDDVGISFTEFSYNLLQSYDFARLNEVHGVELQIGGSDQWGNITSGIDLTRRITQKQVFGMTVPLITKSDGTKFGKTEGGAVWLDPKKTSPYKFYQFWINTADADVYRFLKFFTFMNLEDIDALEEEDKNSGKAPRAQYVLAEQVTGMVHGEEGLAAAKRITESLFSGAAADLTEADFAQLAQDGMPVIELEKGADLQQALVNAGLVPSRGQARTMISSNAVAINGEKQSEPEYLFTDSNRLFDRYTLLRRGKKHDCLICWK.

L-tyrosine is bound at residue Tyr-37. Positions 42–51 (PTADSLHLGH) match the 'HIGH' region motif. L-tyrosine contacts are provided by Tyr-175 and Gln-179. Residues 235–239 (KFGKT) carry the 'KMSKS' region motif. Lys-238 lines the ATP pocket. Positions 357–414 (ADLQQALVNAGLVPSRGQARTMISSNAVAINGEKQSEPEYLFTDSNRLFDRYTLLRRG) constitute an S4 RNA-binding domain.

This sequence belongs to the class-I aminoacyl-tRNA synthetase family. TyrS type 1 subfamily. Homodimer.

It localises to the cytoplasm. It catalyses the reaction tRNA(Tyr) + L-tyrosine + ATP = L-tyrosyl-tRNA(Tyr) + AMP + diphosphate + H(+). Functionally, catalyzes the attachment of tyrosine to tRNA(Tyr) in a two-step reaction: tyrosine is first activated by ATP to form Tyr-AMP and then transferred to the acceptor end of tRNA(Tyr). The protein is Tyrosine--tRNA ligase 1 of Photorhabdus laumondii subsp. laumondii (strain DSM 15139 / CIP 105565 / TT01) (Photorhabdus luminescens subsp. laumondii).